A 748-amino-acid chain; its full sequence is MFNEITKSVTWNGQVLELSTGKIARQADGAVTVKMGNSVLLCTAVVANKAKEGIGLLPLTINYREMAYAAGKIPGGFFKHEGKASDREVLVSRLIDRPIRPLFHPAFVNETHVTCSVLSYDPETPVDILAIIGASAALSLSPAPYLEIVAASKVGLINGEFVLNPTLALLKTSQLDLVVAGTSGSVMMVESEAHLLSEEQMLEAVKFGFESFQPVIKIIKELAEEAKKPKLEMQALYPASLKKEIEKLFVKEIEQAFAIKSKQERSTNLDLIPEKVLTHFVSDIENKKYSNYQIESALKAIESDILRNEILEKNRRIDGRSTTDIRQIACEIGLLPSAHGSALFTRGETQSLVSTTFGTSLDEQIVDSLEGEYKERFMLNYIFPPYSVNEAMPMKAPSRREVGHGKLAWRAINPILPNKVQFPYSIRVVAETTESNGSSSMATVCGSSLALMYAGVPIKAPVAGIAMGLVKEGKNFAVLSDILGDEDYFGDMDFKVAGTSEGITALQMDIKISGVDFKIMKVALEQARLGRLHILEQMNKVISKPNNELSKNAPSTTTIKIDKDKIRDIIGPSGKVIKEICETSGAKIDISDDGTVSVYASDRDKLKVALDKIKAIVVEPEIGEIFNGTVVKVLDSGAFINYVGNKDGFVHISEVSGERIETVSSVLKQGDIVKVKLIGFDNKGKAKLTIKNADKDKSSNNTKPKTHVNNTKDNSEPEQRRDSSKKRAWNEDNNAEIAEVITERKYFN.

Residues aspartate 487 and aspartate 493 each coordinate Mg(2+). The KH domain maps to 554 to 613 (PSTTTIKIDKDKIRDIIGPSGKVIKEICETSGAKIDISDDGTVSVYASDRDKLKVALDKI). The 69-residue stretch at 623–691 (GEIFNGTVVK…NKGKAKLTIK (69 aa)) folds into the S1 motif domain. Residues 693–733 (ADKDKSSNNTKPKTHVNNTKDNSEPEQRRDSSKKRAWNEDN) are disordered. A compositionally biased stretch (polar residues) spans 699–712 (SNNTKPKTHVNNTK). The segment covering 713–722 (DNSEPEQRRD) has biased composition (basic and acidic residues).

The protein belongs to the polyribonucleotide nucleotidyltransferase family. Mg(2+) is required as a cofactor.

It is found in the cytoplasm. It carries out the reaction RNA(n+1) + phosphate = RNA(n) + a ribonucleoside 5'-diphosphate. In terms of biological role, involved in mRNA degradation. Catalyzes the phosphorolysis of single-stranded polyribonucleotides processively in the 3'- to 5'-direction. This Rickettsia peacockii (strain Rustic) protein is Polyribonucleotide nucleotidyltransferase.